Consider the following 184-residue polypeptide: Crossover junction endodeoxyribonuclease RuvC (184 aa).

Residues Asp-11, Glu-73, and Asp-147 contribute to the active site. Asp-11, Glu-73, and Asp-147 together coordinate Mg(2+).

Belongs to the RuvC family. As to quaternary structure, homodimer which binds Holliday junction (HJ) DNA. The HJ becomes 2-fold symmetrical on binding to RuvC with unstacked arms; it has a different conformation from HJ DNA in complex with RuvA. In the full resolvosome a probable DNA-RuvA(4)-RuvB(12)-RuvC(2) complex forms which resolves the HJ. It depends on Mg(2+) as a cofactor.

Its subcellular location is the cytoplasm. It carries out the reaction Endonucleolytic cleavage at a junction such as a reciprocal single-stranded crossover between two homologous DNA duplexes (Holliday junction).. Functionally, the RuvA-RuvB-RuvC complex processes Holliday junction (HJ) DNA during genetic recombination and DNA repair. Endonuclease that resolves HJ intermediates. Cleaves cruciform DNA by making single-stranded nicks across the HJ at symmetrical positions within the homologous arms, yielding a 5'-phosphate and a 3'-hydroxyl group; requires a central core of homology in the junction. The consensus cleavage sequence is 5'-(A/T)TT(C/G)-3'. Cleavage occurs on the 3'-side of the TT dinucleotide at the point of strand exchange. HJ branch migration catalyzed by RuvA-RuvB allows RuvC to scan DNA until it finds its consensus sequence, where it cleaves and resolves the cruciform DNA. This chain is Crossover junction endodeoxyribonuclease RuvC, found in Neisseria gonorrhoeae (strain ATCC 700825 / FA 1090).